A 738-amino-acid polypeptide reads, in one-letter code: Sporulation kinase E (738 aa).

4 consecutive PAS domains span residues 29-99 (ELNQ…FKKG), 150-220 (NEQL…NRKG), 271-342 (SEER…YGEI), and 391-462 (SELK…FDEM). The Histidine kinase domain maps to 523 to 729 (GIAHEIRNPM…VFHITLPVRQ (207 aa)). His-526 is modified (phosphohistidine; by autocatalysis).

The catalysed reaction is ATP + protein L-histidine = ADP + protein N-phospho-L-histidine.. In terms of biological role, phosphorylates the sporulation-regulatory protein spo0A under biofilm growth conditions. Also able to weakly phosphorylate spo0F. The chain is Sporulation kinase E (kinE) from Bacillus subtilis (strain 168).